The following is a 403-amino-acid chain: Probable tRNA sulfurtransferase (403 aa).

In terms of domain architecture, THUMP spans 60-165 (QLAEERLKPI…KEGVFLSCRT (106 aa)). ATP-binding positions include 183 to 184 (ML), 208 to 209 (HF), Arg-265, Gly-287, and Gln-296.

This sequence belongs to the ThiI family.

Its subcellular location is the cytoplasm. The catalysed reaction is [ThiI sulfur-carrier protein]-S-sulfanyl-L-cysteine + a uridine in tRNA + 2 reduced [2Fe-2S]-[ferredoxin] + ATP + H(+) = [ThiI sulfur-carrier protein]-L-cysteine + a 4-thiouridine in tRNA + 2 oxidized [2Fe-2S]-[ferredoxin] + AMP + diphosphate. The enzyme catalyses [ThiS sulfur-carrier protein]-C-terminal Gly-Gly-AMP + S-sulfanyl-L-cysteinyl-[cysteine desulfurase] + AH2 = [ThiS sulfur-carrier protein]-C-terminal-Gly-aminoethanethioate + L-cysteinyl-[cysteine desulfurase] + A + AMP + 2 H(+). Its pathway is cofactor biosynthesis; thiamine diphosphate biosynthesis. Catalyzes the ATP-dependent transfer of a sulfur to tRNA to produce 4-thiouridine in position 8 of tRNAs, which functions as a near-UV photosensor. Also catalyzes the transfer of sulfur to the sulfur carrier protein ThiS, forming ThiS-thiocarboxylate. This is a step in the synthesis of thiazole, in the thiamine biosynthesis pathway. The sulfur is donated as persulfide by IscS. This is Probable tRNA sulfurtransferase from Listeria monocytogenes serovar 1/2a (strain ATCC BAA-679 / EGD-e).